A 1025-amino-acid polypeptide reads, in one-letter code: Dihydropyrimidine dehydrogenase [NADP(+)] (1025 aa).

The 32-residue stretch at 69–100 (ERGALREAMRCLKCADAPCQKSCPTNLDIKSF) folds into the 4Fe-4S ferredoxin-type 1 domain. Residues C79, C82, C87, and C91 each coordinate [4Fe-4S] cluster. V129 lines the FAD pocket. 4 residues coordinate [4Fe-4S] cluster: C130, C136, C140, and Q156. FAD contacts are provided by residues 194–198 (GAGPA), 218–226 (EKQEYVGGI), R235, and L261. NADP(+) contacts are provided by residues 340 to 343 (AGDT), 364 to 365 (RK), and R371. The residue at position 384 (K384) is an N6-acetyllysine. Residues 437-439 (AFG) and 481-487 (DVVGIAN) each bind NADP(+). 480-489 (GDVVGIANTT) is an FAD binding site. Residues S550 and 574–575 (KT) each bind FMN. Residues N609 and 668–670 (NLS) contribute to the substrate site. Catalysis depends on C671, which acts as the Proton acceptor. Position 709 (K709) interacts with FMN. 736–737 (NT) serves as a coordination point for substrate. Residues G767, 793 to 795 (TGG), and 816 to 817 (CS) each bind FMN. 4Fe-4S ferredoxin-type domains are found at residues 944–976 (VVAVIDEEMCINCGKCYMTCNDSGYQAIQFDPE) and 978–1007 (HLPTVTDTCTGCTLCLSVCPIIDCIKMVSR). [4Fe-4S] cluster contacts are provided by C953, C956, C959, C963, C986, C989, C992, and C996.

Belongs to the dihydropyrimidine dehydrogenase family. Homodimer. It depends on FAD as a cofactor. Requires FMN as cofactor. [4Fe-4S] cluster is required as a cofactor.

It is found in the cytoplasm. It carries out the reaction 5,6-dihydrouracil + NADP(+) = uracil + NADPH + H(+). The enzyme catalyses 5,6-dihydrothymine + NADP(+) = thymine + NADPH + H(+). Its pathway is amino-acid biosynthesis; beta-alanine biosynthesis. With respect to regulation, inactivated by 5-iodouracil. Functionally, involved in pyrimidine base degradation. Catalyzes the reduction of uracil and thymine. Also involved the degradation of the chemotherapeutic drug 5-fluorouracil. This chain is Dihydropyrimidine dehydrogenase [NADP(+)] (DPYD), found in Bos taurus (Bovine).